The chain runs to 195 residues: Dual-action ribosomal maturation protein DarP (195 aa).

It belongs to the DarP family.

It is found in the cytoplasm. Member of a network of 50S ribosomal subunit biogenesis factors which assembles along the 30S-50S interface, preventing incorrect 23S rRNA structures from forming. Promotes peptidyl transferase center (PTC) maturation. The chain is Dual-action ribosomal maturation protein DarP from Stenotrophomonas maltophilia (strain K279a).